A 601-amino-acid chain; its full sequence is Glutathione-regulated potassium-efflux system protein KefB (601 aa).

Transmembrane regions (helical) follow at residues 4–24 (ADLLTAGVLFLFAAVAAVPLA), 29–49 (IGAVLGYLLAGIAIGPWGLGF), 55–75 (EILHFSELGVVFLMFIIGLEL), 87–107 (IFGVGAAQVLLSAAVLAGLLM), 111–131 (FLWQAAVVGGIGLAMSSTAMA), 152–172 (VLLFQDLAVIPALALVPLLAG), 177–197 (HFDWFKVAMKVLAFAVMLIGG), 207–227 (FIAASGVREVFTAATLLLVLS), 230–250 (LFMDALGLSMALGTFIAGVLL), 262–282 (AIDPFKGLLLGLFFISVGMSL), 284–304 (LGVLYTHLLWVAASVVILVAI), 324–344 (MQFASVLSQGGEFAFVLFSTA), and 356–376 (ALLLVTVTLSMMTTPLLMKGI). Residues 400 to 519 (KPQVIVVGFG…AGVTQFSRET (120 aa)) enclose the RCK N-terminal domain.

Belongs to the monovalent cation:proton antiporter 2 (CPA2) transporter (TC 2.A.37) family. KefB subfamily. As to quaternary structure, interacts with the regulatory subunit KefG.

It is found in the cell inner membrane. Its function is as follows. Pore-forming subunit of a potassium efflux system that confers protection against electrophiles. Catalyzes K(+)/H(+) antiport. The chain is Glutathione-regulated potassium-efflux system protein KefB from Salmonella schwarzengrund (strain CVM19633).